Consider the following 160-residue polypeptide: SsrA-binding protein (160 aa).

The protein belongs to the SmpB family.

It localises to the cytoplasm. Its function is as follows. Required for rescue of stalled ribosomes mediated by trans-translation. Binds to transfer-messenger RNA (tmRNA), required for stable association of tmRNA with ribosomes. tmRNA and SmpB together mimic tRNA shape, replacing the anticodon stem-loop with SmpB. tmRNA is encoded by the ssrA gene; the 2 termini fold to resemble tRNA(Ala) and it encodes a 'tag peptide', a short internal open reading frame. During trans-translation Ala-aminoacylated tmRNA acts like a tRNA, entering the A-site of stalled ribosomes, displacing the stalled mRNA. The ribosome then switches to translate the ORF on the tmRNA; the nascent peptide is terminated with the 'tag peptide' encoded by the tmRNA and targeted for degradation. The ribosome is freed to recommence translation, which seems to be the essential function of trans-translation. This chain is SsrA-binding protein, found in Proteus mirabilis (strain HI4320).